A 446-amino-acid chain; its full sequence is ATP-dependent RNA helicase SUB2 (446 aa).

The residue at position 2 (S2) is an N-acetylserine. Residues S13 and S37 each carry the phosphoserine modification. Residues 23–41 show a composition bias toward low complexity; that stretch reads ASKAAEAGETGAATSATEG. The interval 23–52 is disordered; that stretch reads ASKAAEAGETGAATSATEGDNNNNTAAGDK. Residues 62-90 carry the Q motif motif; the sequence is TGFKDFLLKPELSRAIIDCGFEHPSEVQQ. Residues 93–268 enclose the Helicase ATP-binding domain; that stretch reads IPQSIHGTDV…RRFLQNPLEI (176 aa). 106–113 lines the ATP pocket; it reads AKSGLGKT. T169 carries the phosphothreonine modification. The DECD box signature appears at 215–218; that stretch reads DECD. A Helicase C-terminal domain is found at 280 to 441; the sequence is GLQQYYIKLE…EFPEEGIDPS (162 aa).

This sequence belongs to the DEAD box helicase family. DECD subfamily. Component of the TREX complex composed of at least SUB2, TEX1, YRA1 and the four THO complex components: HPR1, MFT1, THO2 and THP1. Interacts with HPR1, YRA1, and YRA2. SUB2 may mediate the interaction between the THO complex and YRA1. Associates with growing mRNP complexes during transcription. This association requires the presence of HPR1. Also interacts with SAC3. Interacts with THO1 in the presence of RNA; this interaction facilitates RNA binding of SUB2.

It localises to the nucleus. The enzyme catalyses ATP + H2O = ADP + phosphate + H(+). Its function is as follows. ATP-binding RNA helicase component of the TREX complex involved in transcription elongation and required for the export of mRNA out of the nucleus. SUB2 also plays a role in pre-mRNA splicing and spliceosome assembly. May be involved in rDNA and telomeric silencing, and maintenance of genome integrity. Associates with THO1, which facilitates RNA binding of SUB2 and likely plays a role in mRNA export. The sequence is that of ATP-dependent RNA helicase SUB2 (SUB2) from Saccharomyces cerevisiae (strain ATCC 204508 / S288c) (Baker's yeast).